A 111-amino-acid chain; its full sequence is CRIB domain-containing protein RIC2 (111 aa).

One can recognise a CRIB domain in the interval 71-84; it reads IGFPTDVKHLSHIG.

Interacts with ARAC11/ROP1. In terms of tissue distribution, expressed in roots, leaves, stems, flowers, siliques and pollen.

The protein resides in the cell membrane. Functions as a downstream effector of Rho-related GTP binding proteins of the 'Rho of Plants' (ROPs) family. Participates in the propagation of ROP GTPase signals in specific cellular responses. Is involved in pollen tube growth regulation through its interaction with ARAC11/ROP1. The chain is CRIB domain-containing protein RIC2 (RIC2) from Arabidopsis thaliana (Mouse-ear cress).